A 539-amino-acid polypeptide reads, in one-letter code: MLVFRRNYAKRNTGSKFKILPEYKLKCGLEIHTQLNTDNKLFSMSTNSPFADVDKPNYHTSYFDVSIPGTQPILNLQAVLFALKLSLALRCKVSLNSHFDRKHYFYGDQPLGYQITQHYNPFSSKGKLRLYKDLDSIEEAFKDISVIQLQIEQDTGKSVYNSTDSNTKIDLNRSNVPLIEMVTEPDFTDLKQIRAFIKKYQNLVRHLKISTGDLETGAMRVDVNLSINDYARVELKNLPNTSSITNAIKYEYNRQVNMIEKGEGDQLKHTETRGWTGSETVKLRTKESIIDYRYMPDPELPNILLTNEIVEGVEKTIPTLPDDTCMMLMQEPYGLTLKDAKILTINSNGHDDLYSHDELRACYFSTFDAYHSLCKKQNEEFVRKLPANWIIHELLGNLNKMEIPLIKVSHILPPEKFAELLLLISKKTISNASGKLLLSHILNSFKENSFVASEPINFNALIEEFELHAVSDVGSEELELICESIITELNNNKMIEDIKSGKKKNSIKFLVGQAMRISQGRIQAQEFEITFKRLLGVEP.

The protein belongs to the GatB/GatE family. GatB subfamily. As to quaternary structure, subunit of the heterotrimeric GatFAB amidotransferase (AdT) complex, composed of A, B and F subunits.

It localises to the mitochondrion. It catalyses the reaction L-glutamyl-tRNA(Gln) + L-glutamine + ATP + H2O = L-glutaminyl-tRNA(Gln) + L-glutamate + ADP + phosphate + H(+). Functionally, allows the formation of correctly charged Gln-tRNA(Gln) through the transamidation of misacylated Glu-tRNA(Gln) in the mitochondria. The reaction takes place in the presence of glutamine and ATP through an activated gamma-phospho-Glu-tRNA(Gln). The chain is Glutamyl-tRNA(Gln) amidotransferase subunit B, mitochondrial from Kluyveromyces lactis (strain ATCC 8585 / CBS 2359 / DSM 70799 / NBRC 1267 / NRRL Y-1140 / WM37) (Yeast).